The chain runs to 1224 residues: MAQSRRHPHGRASSAGPRMSTEASSKPLKVGSRVEVIGKGHRGTVAYVGATLXATGKWVGVILDEAKGKNDGTVQGRKYFTCEENHGIFVRQSQIQVFEDGADTTSPETPESAALKVPKRHSRXAAKGSKLRGAKPKKTTARRPKPTRTPTSAPSSGTAGPSGSASASGGEMSSSEPSTPAQTPLVAPVIPSPSLTSPVAPMVPSPTKEEENLRSQVRDLEEKLETLKIKRNEDKAKLKELEKYKIQLEQVQEWKSKMQEQQADLQRRLKEAKKEAKDALEAKERYMEEMADTADAIEMATLDKEMAEERAESLQQEVDSLKEKVEYLTMDLEILKHEIEEKGSDGAASSYQVKQLEEQNARLKEALVRMRDLSASEKQEHVKLQKQMEKKNTELESLRQQREKLQEEVKQAEKTVDELKEQVDAALGAEEMVETLTERNLDLEEKVRELRETVGDLEAMNEMNDELQENARETELELREQLDLAAARVREAEKRVEAAQETVADYQQTIKKYRELTAHLQDVNRELMSQQEASAEKQQQPPPEIFDFKIKFAETKAHAKAIEMELRQMEVQQANRHVSLLTSFMPDSFLRHGGDHDCILVLLLIPRLICKADVISKQAQEKFELNENCTARAGLRGAAGEQLSFAAGLVYSLSLLQATLHKYEQALNKCSVEVYKKVGMLYPEMSVHERSLDFLIELLHKDQLDETVNVEPLTKAIKYYQHLYSIHLAEQAEDCTMQLADHIKFTQSALDCMGVEVCRLRAFLQAGQEASDLAILLKDLETSCSDIRQFCKKIRRRMPGTDAPGIPAALGFGQQVSDTLLDCRKHLTWVVAVLQEVAAAGAQLIAPLAENGAAGGEAGGLGLQSQRADLQRSGHQPLRVPAPVLQHPHCHHEQDATAMQEGEYDADRPQSKPTPPAELRAAALRAEITDAEGLGLKLEDRETVIKELKKSLKIKGEELSEANVRLSLLEKKLDSASKDADDRVEKIQTKLDETQTLLKKKEKEFEETMDALQADIDQLESEKVELKQRLNNQSKRTIEGLRGAPASGVASIVSGIAGEEQQRGVGAGQAAGGSAGPVQVKDSPLLLQQIEALQLSIRHLKNENNRLKGAQMKLELAGLKPLQVAKVSLPQSKQGEGPATLTLYRKSTQLLETLYQMSTNAKVVDTKQTKSGRSGARLLEQTARLWAMKGSIEALRTRPCGRWCSSSRARASPPASACSPPRPS.

Over residues 1–10 (MAQSRRHPHG) the composition is skewed to basic residues. The segment at 1 to 30 (MAQSRRHPHGRASSAGPRMSTEASSKPLKV) is disordered. The CAP-Gly domain maps to 49 to 91 (GATLXATGKWVGVILDEAKGKNDGTVQGRKYFTCEENHGIFVR). Disordered regions lie at residues 100-217 (DGAD…RSQV), 374-402 (SASE…RQQR), and 888-918 (PHCH…PPAE). Basic residues predominate over residues 117–146 (VPKRHSRXAAKGSKLRGAKPKKTTARRPKP). Positions 148–180 (RTPTSAPSSGTAGPSGSASASGGEMSSSEPSTP) are enriched in low complexity. A coiled-coil region spans residues 205 to 540 (SPTKEEENLR…QEASAEKQQQ (336 aa)). The segment covering 207-217 (TKEEENLRSQV) has biased composition (basic and acidic residues). Coiled coils occupy residues 936–1042 (LKLE…EGLR) and 1081–1117 (KDSP…LELA). A disordered region spans residues 1203–1224 (WCSSSRARASPPASACSPPRPS). A compositionally biased stretch (low complexity) spans 1204-1224 (CSSSRARASPPASACSPPRPS).

It belongs to the dynactin 150 kDa subunit family. As to quaternary structure, monomer and homodimer. Subunit of dynactin, a multiprotein complex part of a tripartite complex with dynein and a adapter, such as BICDL1, BICD2 or HOOK3. The dynactin complex is built around ACTR1A/ACTB filament and consists of an actin-related filament composed of a shoulder domain, a pointed end and a barbed end. Its length is defined by its flexible shoulder domain. The soulder is composed of 2 DCTN1 subunits, 4 DCTN2 and 2 DCTN3. DCTN1/p150(glued) binds directly to microtubules and to cytoplasmic dynein. In terms of tissue distribution, ubiquitously expressed.

The protein resides in the cytoplasm. It is found in the cytoskeleton. It localises to the microtubule organizing center. The protein localises to the centrosome. Its subcellular location is the centriole. The protein resides in the spindle. It is found in the cell cortex. In terms of biological role, part of the dynactin complex that activates the molecular motor dynein for ultra-processive transport along microtubules. Plays a key role in dynein-mediated retrograde transport of vesicles and organelles along microtubules by recruiting and tethering dynein to microtubules. Binds to both dynein and microtubules providing a link between specific cargos, microtubules and dynein. Essential for targeting dynein to microtubule plus ends, recruiting dynein to membranous cargos and enhancing dynein processivity (the ability to move along a microtubule for a long distance without falling off the track). Can also act as a brake to slow the dynein motor during motility along the microtubule. Can regulate microtubule stability by promoting microtubule formation, nucleation and polymerization and by inhibiting microtubule catastrophe in neurons. Inhibits microtubule catastrophe by binding both to microtubules and to tubulin, leading to enhanced microtubule stability along the axon. Plays a role in metaphase spindle orientation. Plays a role in centriole cohesion and subdistal appendage organization and function. Its recruitment to the centriole in a KIF3A-dependent manner is essential for the maintenance of centriole cohesion and the formation of subdistal appendage. Also required for microtubule anchoring at the mother centriole. Plays a role in primary cilia formation. The chain is Dynactin subunit 1 (DCTN1) from Gallus gallus (Chicken).